The primary structure comprises 619 residues: Kinesin light chain 4 (619 aa).

Residue Ser-2 is modified to N-acetylserine. One copy of the TPR 1 repeat lies at 55–88 (QQGGHEEGLVHEKARQLRRSMENIELGLSEAQVM). Residues 65-155 (HEKARQLRRS…HLEFLRQLRQ (91 aa)) are a coiled coil. Residues 156-175 (YDEDGHGMEEKEGEATKDSL) are compositionally biased toward basic and acidic residues. A disordered region spans residues 156–199 (YDEDGHGMEEKEGEATKDSLDDLFPNEEEEDSGNDLSRGQGAAA). Ser-174 is modified (phosphoserine). The segment covering 179–188 (FPNEEEEDSG) has biased composition (acidic residues). TPR repeat units lie at residues 211-244 (LRTLHNLVIQYAAQGRYEVAVPLCKQALEDLERT), 253-286 (ATMLNILALVYRDQNKYKEAAHLLNDALSIREST), 295-328 (AATLNNLAVLYGKRGKYKEAEPLCQRALEIREKV), 337-370 (AKQLNNLALLCQNQGKYEAVERYYQRALAIYESQ), and 379-412 (ARTKNNLASCYLKQGKYSEAEALYKEILTCAHVQ). At Ser-460 the chain carries Phosphoserine. One copy of the TPR 7 repeat lies at 464–497 (NTTLKNLGALYRRQGKLEAAETLEECALRSRKQG). A phosphoserine mark is found at Ser-565, Ser-566, and Ser-590. The tract at residues 571–619 (RKLQGTEPRPSSSSMKRAASLNYLNQPNAAPLQVSRGLSASTVDLSSSS) is disordered. Low complexity predominate over residues 609 to 619 (SASTVDLSSSS). Thr-612 is subject to Phosphothreonine.

Belongs to the kinesin light chain family. As to quaternary structure, oligomeric complex composed of two heavy chains and two light chains.

The protein resides in the cytoplasm. It is found in the cytoskeleton. Its function is as follows. Kinesin is a microtubule-associated force-producing protein that may play a role in organelle transport. The light chain may function in coupling of cargo to the heavy chain or in the modulation of its ATPase activity. This is Kinesin light chain 4 (Klc4) from Mus musculus (Mouse).